A 130-amino-acid polypeptide reads, in one-letter code: Small ribosomal subunit protein uS9 (130 aa).

It belongs to the universal ribosomal protein uS9 family.

The protein is Small ribosomal subunit protein uS9 of Shigella sonnei (strain Ss046).